Reading from the N-terminus, the 244-residue chain is Meiotic drive suppressor wtf2 (244 aa).

A compositionally biased stretch (polar residues) spans 1–10 (MKNNYTSLKS). The disordered stretch occupies residues 1–68 (MKNNYTSLKS…RENNPSRSTD (68 aa)). The span at 17 to 30 (ELKTDHEIDLEKGP) shows a compositional bias: basic and acidic residues. Transmembrane regions (helical) follow at residues 73–93 (FLIK…LAIC), 110–130 (WTLF…LTYF), 149–169 (WENM…VGSP), and 183–203 (LKWS…VFIA).

It belongs to the WTF family. As to quaternary structure, homomer. Interacts with other proteins that exhibit high sequence similarity.

It is found in the spore membrane. Its subcellular location is the vacuole membrane. In terms of biological role, acts as a suppressor component of the dual wtf meiotic drive system, and can suppress but not confer meiotic drive by compatible poisons. Wtf meiotic drive systems promote unequal transmission of alleles from the parental zygote to progeny spores by encoding a poison and an antidote from the same locus; the poison is trans-acting and forms toxic aggregates in all spores within an ascus, wherease the antidote is spore-specific and targets aggregates for degradation by the vacuole. Meiotic drive by wtf systems therefore lead to poisoning of all progeny that do not inherit the dual poison/antidote allele, or express a compatible antidote. The sequence is that of Meiotic drive suppressor wtf2 from Schizosaccharomyces kambucha (Fission yeast).